A 499-amino-acid polypeptide reads, in one-letter code: Ent-kaurenoic acid oxidase 1 (499 aa).

The helical transmembrane segment at 5 to 25 (AWWAVAAVVAALAVVALDAAV) threads the bilayer. Heme is bound at residue cysteine 443.

The protein belongs to the cytochrome P450 family. Heme serves as cofactor.

It is found in the endoplasmic reticulum membrane. It catalyses the reaction ent-kaur-16-en-19-oate + 3 reduced [NADPH--hemoprotein reductase] + 3 O2 = gibberellin A12 + 3 oxidized [NADPH--hemoprotein reductase] + 4 H2O + 4 H(+). It carries out the reaction ent-kaur-16-en-19-oate + reduced [NADPH--hemoprotein reductase] + O2 = ent-7alpha-hydroxykaur-16-en-19-oate + oxidized [NADPH--hemoprotein reductase] + H2O + H(+). The catalysed reaction is ent-7alpha-hydroxykaur-16-en-19-oate + reduced [NADPH--hemoprotein reductase] + O2 = gibberellin A12 aldehyde + oxidized [NADPH--hemoprotein reductase] + 2 H2O + H(+). The enzyme catalyses gibberellin A12 aldehyde + reduced [NADPH--hemoprotein reductase] + O2 = gibberellin A12 + oxidized [NADPH--hemoprotein reductase] + H2O + 2 H(+). It functions in the pathway plant hormone biosynthesis; gibberellin biosynthesis. In terms of biological role, catalyzes three successive oxidations of ent-kaurenoic acid giving gibberellin 12 (GA12), a key step in gibberellins (GAs) biosynthesis. GAs, which are involved many processes, including stem elongation, play a central role in plant development. In Hordeum vulgare (Barley), this protein is Ent-kaurenoic acid oxidase 1.